We begin with the raw amino-acid sequence, 1366 residues long: Serine/threonine-protein kinase RUNKEL (1366 aa).

Residues 10–18 and lysine 33 contribute to the ATP site; that span reads IGHGKCSTV. Aspartate 121 functions as the Proton acceptor in the catalytic mechanism. Disordered regions lie at residues 276–356, 367–386, 398–502, and 524–549; these read TKPC…VNIL, QKEN…NENC, LDFD…DSSK, and PSRK…FSKK. Over residues 283 to 302 the composition is skewed to basic and acidic residues; that stretch reads RNGDRPNKTPPKYREKDRKG. Over residues 304–313 the composition is skewed to polar residues; that stretch reads SKQNENSIQG. Positions 367–376 are enriched in basic and acidic residues; the sequence is QKENEKENYR. The segment covering 398-414 has biased composition (acidic residues); sequence LDFDENNDDEGPDESEG. A compositionally biased stretch (basic and acidic residues) spans 422–433; that stretch reads QEERVMSHNENH. The span at 438–454 shows a compositional bias: polar residues; the sequence is VVSSNVPDENSSANETP. HEAT repeat units lie at residues 595–633, 638–675, 699–737, 835–872, 878–907, 908–945, 946–986, 992–1018, 1019–1057, 1072–1111, 1279–1316, and 1329–1366; these read LTNG…HSTS, LANS…YIST, QVSN…QGAY, TEEK…NSRR, FCNA…AFVN, VIAS…RAPV, KTNA…LVEA, DDFR…NGEI, IIRE…LLTE, ISNS…IKIS, TNLP…YACK, and GHDV…RLPR.

Belongs to the protein kinase superfamily. Ser/Thr protein kinase family. Binds to microtubules (MT). As to expression, expressed in proliferating tissues of seedlings, lateral roots, young rosette leaves, siliques, flowers, embryos and stems (including apical meristem).

It is found in the cytoplasm. It localises to the cytoskeleton. The protein localises to the phragmoplast. The protein resides in the spindle. The catalysed reaction is L-seryl-[protein] + ATP = O-phospho-L-seryl-[protein] + ADP + H(+). It catalyses the reaction L-threonyl-[protein] + ATP = O-phospho-L-threonyl-[protein] + ADP + H(+). In terms of biological role, essential protein that regulates phragmoplast microtubule organization during cell plate expansion in cytokinesis during cell division, both somatic and syncytial. Required for endosperm cellularisation. In pollen development, involved in cellularisation during microsporogenesis by regulating radial microtubules (MT) organization in microspore mother cells. Seems to not have kinase activity. This Arabidopsis thaliana (Mouse-ear cress) protein is Serine/threonine-protein kinase RUNKEL.